The sequence spans 129 residues: Trefoil factor 2 (129 aa).

Residues 1-23 (MGPRGAPLLAVVLVLGLHALVEG) form the signal peptide. 2 P-type domains span residues 29–73 (CRCS…FHPL) and 79–122 (EQCV…FFPQ). Cystine bridges form between C29-C127, C31-C58, C42-C57, C52-C69, C81-C107, C91-C106, and C101-C118.

In terms of tissue distribution, stomach and pancreas.

The protein localises to the secreted. In terms of biological role, inhibits gastrointestinal motility and gastric acid secretion. Could function as a structural component of gastric mucus, possibly by stabilizing glycoproteins in the mucus gel through interactions with carbohydrate side chains. The protein is Trefoil factor 2 (Tff2) of Mus musculus (Mouse).